The primary structure comprises 698 residues: Transcription factor cwo (698 aa).

A basic motif; degenerate region spans residues 62 to 75; that stretch reads QDPLSHRIIEKRRR. The region spanning 62 to 117 is the bHLH domain; sequence QDPLSHRIIEKRRRDRMNSCLADLSRLIPPQYQRKGRGRIEKTEIIEMAIRHLKHL. The helix-loop-helix motif stretch occupies residues 76–117; sequence DRMNSCLADLSRLIPPQYQRKGRGRIEKTEIIEMAIRHLKHL. One can recognise an Orange domain in the interval 128–159; sequence YRSGYMDCMKEAAKFLYDVHMQDFCHRLLGRL. 2 disordered regions span residues 257 to 319 and 349 to 369; these read SSPA…ASST and STAP…FESS. Residues 280–318 are compositionally biased toward low complexity; it reads APPAADNVPSNSTGSGSAAACAGGNSNSSGSNSSNAASS. Residues 359 to 369 are compositionally biased toward basic and acidic residues; it reads TDSSHHDFESS.

As to expression, expressed in adult brain where it is detected in the dorsal lateral neurons, small and large ventral lateral neurons and dorsal neurons 1, 2 and 3 (at protein level). Expressed at constant levels in a 12 hour light / 12 hour day cycle (at protein level). Strongly expressed in pacemaker neurons. In adults, mRNA expression oscillates in a circadian manner with a peak at around 14 hour Zeitgeber time. mRNA levels oscillate in a rhythmic manner in both 12 hour light / 12 hour dark and constant dark conditions with a morning peak around the time of lights-on and an evening peak around the time of lights-off in light/dark conditions. During stage 8 of embryonic development, expressed in the anterior and posterior midgut primordia and expression in the gut continues throughout embryonic development. During germ band retraction, expression is initiated in many tissues in a prominent segmentally repeated pattern. Later, expression is ubiquitous but has higher levels in segmentally repeated clusters of cells. Expression is also found in cells of the amnioserosa, in the head region, in posterior spiracles and in tracheal trees.

It is found in the nucleus. Functionally, plays a role in the regulation of circadian rhythms. Transcriptional repressor which inhibits Clock-mediated transcriptional activation by binding to E boxes in the promoters of Clock target genes and repressing their transcription. E box binding activity is time-dependent with higher binding activity seen in the early morning (zeitgeber time 2) than early evening (zeitgeber time 14) and is dependent on the presence of the circadian protein per. It is likely that per binds to Clock-cycle heterodimers, reducing their affinity for E box binding and allowing cwo to bind instead. Negatively regulates its own expression. The polypeptide is Transcription factor cwo (Drosophila melanogaster (Fruit fly)).